A 248-amino-acid polypeptide reads, in one-letter code: tRNA pseudouridine synthase A (248 aa).

Asp53 acts as the Nucleophile in catalysis. Tyr111 contributes to the substrate binding site.

Belongs to the tRNA pseudouridine synthase TruA family. As to quaternary structure, homodimer.

The enzyme catalyses uridine(38/39/40) in tRNA = pseudouridine(38/39/40) in tRNA. Functionally, formation of pseudouridine at positions 38, 39 and 40 in the anticodon stem and loop of transfer RNAs. This chain is tRNA pseudouridine synthase A, found in Listeria monocytogenes serovar 1/2a (strain ATCC BAA-679 / EGD-e).